Reading from the N-terminus, the 166-residue chain is SsrA-binding protein (166 aa).

A disordered region spans residues 146 to 166; it reads KRAAEKEKQSKKDVKAAMERY.

This sequence belongs to the SmpB family.

The protein localises to the cytoplasm. Functionally, required for rescue of stalled ribosomes mediated by trans-translation. Binds to transfer-messenger RNA (tmRNA), required for stable association of tmRNA with ribosomes. tmRNA and SmpB together mimic tRNA shape, replacing the anticodon stem-loop with SmpB. tmRNA is encoded by the ssrA gene; the 2 termini fold to resemble tRNA(Ala) and it encodes a 'tag peptide', a short internal open reading frame. During trans-translation Ala-aminoacylated tmRNA acts like a tRNA, entering the A-site of stalled ribosomes, displacing the stalled mRNA. The ribosome then switches to translate the ORF on the tmRNA; the nascent peptide is terminated with the 'tag peptide' encoded by the tmRNA and targeted for degradation. The ribosome is freed to recommence translation, which seems to be the essential function of trans-translation. The sequence is that of SsrA-binding protein from Synechococcus sp. (strain CC9605).